A 205-amino-acid chain; its full sequence is Dephospho-CoA kinase (205 aa).

Positions 13-205 (RIGLTGGIAS…KWINTIREIL (193 aa)) constitute a DPCK domain. Residue 21-26 (ASGKST) participates in ATP binding.

This sequence belongs to the CoaE family.

The protein resides in the cytoplasm. The enzyme catalyses 3'-dephospho-CoA + ATP = ADP + CoA + H(+). Its pathway is cofactor biosynthesis; coenzyme A biosynthesis; CoA from (R)-pantothenate: step 5/5. In terms of biological role, catalyzes the phosphorylation of the 3'-hydroxyl group of dephosphocoenzyme A to form coenzyme A. The protein is Dephospho-CoA kinase of Prochlorococcus marinus (strain MIT 9312).